The chain runs to 378 residues: uncharacterized protein (378 aa).

The next 11 helical transmembrane spans lie at 12 to 34, 44 to 66, 92 to 112, 132 to 154, 161 to 180, 200 to 222, 235 to 257, 267 to 285, 290 to 312, 327 to 349, and 356 to 373; these read SLAFALYDTGETILGALVVSTFF, VKIYSLSYGISLLASFALAIFLG, SIALLYGTPYLALLSFLLMLI, GFASGLGVSFGYVGSAIALIFLA, EVYAVVGLIFLILAVPSIIT, TFLLFLLSLLTLTEVANTLIAMM, VEIYRIIGFSALGGVLGGIFWGV, VFPLGFFLWSFFFILLFFA, LIFVGLLAGFSLAHLWSTSRVYI, FLSLTERVASSFGLFLWSFFLFI, and LSALLMGTLPLIGFFIYL.

It is found in the cell membrane. This is an uncharacterized protein from Aquifex aeolicus (strain VF5).